The following is a 147-amino-acid chain: Ribosome maturation factor RimP (147 aa).

The protein belongs to the RimP family.

The protein resides in the cytoplasm. Required for maturation of 30S ribosomal subunits. The chain is Ribosome maturation factor RimP from Sulfurihydrogenibium azorense (strain DSM 15241 / OCM 825 / Az-Fu1).